The primary structure comprises 180 residues: Protein GrpE (180 aa).

The protein belongs to the GrpE family. Homodimer.

It is found in the cytoplasm. Its function is as follows. Participates actively in the response to hyperosmotic and heat shock by preventing the aggregation of stress-denatured proteins, in association with DnaK and GrpE. It is the nucleotide exchange factor for DnaK and may function as a thermosensor. Unfolded proteins bind initially to DnaJ; upon interaction with the DnaJ-bound protein, DnaK hydrolyzes its bound ATP, resulting in the formation of a stable complex. GrpE releases ADP from DnaK; ATP binding to DnaK triggers the release of the substrate protein, thus completing the reaction cycle. Several rounds of ATP-dependent interactions between DnaJ, DnaK and GrpE are required for fully efficient folding. This Picrophilus torridus (strain ATCC 700027 / DSM 9790 / JCM 10055 / NBRC 100828 / KAW 2/3) protein is Protein GrpE.